The following is a 191-amino-acid chain: dCTP deaminase, dUMP-forming (191 aa).

DCTP-binding positions include 101 to 106 (KSSLGR), Asp-119, 127 to 129 (TLE), Gln-148, Tyr-162, and Gln-174. The Proton donor/acceptor role is filled by Glu-129.

The protein belongs to the dCTP deaminase family. As to quaternary structure, homotrimer.

It catalyses the reaction dCTP + 2 H2O = dUMP + NH4(+) + diphosphate. It participates in pyrimidine metabolism; dUMP biosynthesis; dUMP from dCTP: step 1/1. Bifunctional enzyme that catalyzes both the deamination of dCTP to dUTP and the hydrolysis of dUTP to dUMP without releasing the toxic dUTP intermediate. The protein is dCTP deaminase, dUMP-forming of Streptomyces avermitilis (strain ATCC 31267 / DSM 46492 / JCM 5070 / NBRC 14893 / NCIMB 12804 / NRRL 8165 / MA-4680).